The following is a 539-amino-acid chain: MSFLVENQLLALVVIMTVGLLLGRIKIFGFRLGVAAVLFVGLALSTIEPDISVPSLIYVVGLSLFVYTIGLEAGPGFFTSMKTTGLRNNALTLGAIIATTALAWALITVLNIDAASGAGMLTGALTNTPAMAAVVDALPSLIDDTGQLHLIAELPVVAYSLAYPLGVLIVILSIAIFSSVFKVDHNKEAEEAGVAVQELKGRRIRVTVADLPALENIPELLNLHVIVSRVERDGEQFIPLYGEHARIGDVLTVVGADEELNRAEKAIGELIDGDPYSNVELDYRRIFVSNTAVVGTPLSKLQPLFKDMLITRIRRGDTDLVASSDMTLQLGDRVRVVAPAEKLREATQLLGDSYKKLSDFNLLPLAAGLMIGVLVGMVEFPLPGGSSLKLGNAGGPLVVALLLGMINRTGKFVWQIPYGANLALRQLGITLFLAAIGTSAGAGFRSAISDPQSLTIIGFGALLTLFISITVLFVGHKLMKIPFGETAGILAGTQTHPAVLSYVSDASRNELPAMGYTSVYPLAMIAKILAAQTLLFLLI.

The next 5 helical transmembrane spans lie at 4–22 (LVEN…GLLL), 27–46 (IFGF…ALST), 56–78 (LIYV…PGFF), 90–112 (ALTL…VLNI), and 155–177 (PVVA…IAIF). RCK C-terminal domains are found at residues 187–269 (KEAE…AIGE) and 271–352 (IDGD…LLGD). The next 4 helical transmembrane spans lie at 360-382 (FNLL…EFPL), 422-444 (LALR…GAGF), 453-475 (SLTI…LFVG), and 516-538 (YTSV…LFLL).

The protein belongs to the AAE transporter (TC 2.A.81) family.

It localises to the cell membrane. This is an uncharacterized protein from Corynebacterium glutamicum (strain ATCC 13032 / DSM 20300 / JCM 1318 / BCRC 11384 / CCUG 27702 / LMG 3730 / NBRC 12168 / NCIMB 10025 / NRRL B-2784 / 534).